The following is a 106-amino-acid chain: NADH-quinone oxidoreductase subunit K (106 aa).

3 helical membrane passes run 10–30, 34–54, and 67–87; these read VTYI…GVLI, IVII…VFVT, and IVFF…ALVI.

This sequence belongs to the complex I subunit 4L family. In terms of assembly, NDH-1 is composed of 14 different subunits. Subunits NuoA, H, J, K, L, M, N constitute the membrane sector of the complex.

The protein localises to the cell inner membrane. The enzyme catalyses a quinone + NADH + 5 H(+)(in) = a quinol + NAD(+) + 4 H(+)(out). In terms of biological role, NDH-1 shuttles electrons from NADH, via FMN and iron-sulfur (Fe-S) centers, to quinones in the respiratory chain. The immediate electron acceptor for the enzyme in this species is believed to be ubiquinone. Couples the redox reaction to proton translocation (for every two electrons transferred, four hydrogen ions are translocated across the cytoplasmic membrane), and thus conserves the redox energy in a proton gradient. The chain is NADH-quinone oxidoreductase subunit K from Leptospira biflexa serovar Patoc (strain Patoc 1 / Ames).